Reading from the N-terminus, the 1666-residue chain is Latent-transforming growth factor beta-binding protein 4 (1666 aa).

The first 24 residues, 1–24 (MRRPGLGGPCPLLLLLLLPAATSA), serve as a signal peptide directing secretion. The region spanning 148–180 (ARVLCPLICHNGGVCVKPDRCLCPPDFAGKFCQ) is the EGF-like 1 domain. 6 disulfide bridges follow: cysteine 152–cysteine 162, cysteine 156–cysteine 168, cysteine 170–cysteine 179, cysteine 288–cysteine 310, cysteine 297–cysteine 323, and cysteine 311–cysteine 326. Residues 286–338 (GYCFRELRGSECASPLPGLRTQEVCCRGEGLAWGVHDCHPCAEHLRNSNQVSG) form the TB 1 domain. Asparagine 351 carries N-linked (GlcNAc...) asparagine glycosylation. Residues 356 to 396 (DVDECATGGRCQHGECANTRGGYTCVCPDGFLLDSSRSSCI) form the EGF-like 2; calcium-binding domain. 7 cysteine pairs are disulfide-bonded: cysteine 360–cysteine 371, cysteine 366–cysteine 380, cysteine 382–cysteine 395, cysteine 408–cysteine 430, cysteine 417–cysteine 443, cysteine 431–cysteine 446, and cysteine 432–cysteine 458. In terms of domain architecture, TB 2 spans 406-458 (GPCYRVLHDGGCSLPILRNITKQICCCSRVGKAWGRGCQLCPPYGSEGFREIC). The N-linked (GlcNAc...) asparagine glycan is linked to asparagine 424. The disordered stretch occupies residues 473–590 (YNTRPLNQDP…EIPESGPSSS (118 aa)). Residues 491-502 (RVPPATPRPPTG) are compositionally biased toward pro residues. The span at 521–561 (PRPRPEPRPRPESRPRPEPRPRPEPRPQPESQPRPESRPRP) shows a compositional bias: basic and acidic residues. Pro residues predominate over residues 562–573 (ESQPWPEFPLPS). A compositionally biased stretch (low complexity) spans 579–590 (GPEIPESGPSSS). The 42-residue stretch at 588 to 629 (SSSMCQRNPQVCGPGRCVPRPSGYTCACDPGFRLGPQGTRCI) folds into the EGF-like 3 domain. Intrachain disulfides connect cysteine 592-cysteine 604, cysteine 599-cysteine 613, cysteine 615-cysteine 628, cysteine 634-cysteine 646, cysteine 641-cysteine 655, cysteine 657-cysteine 670, cysteine 676-cysteine 688, cysteine 683-cysteine 697, cysteine 699-cysteine 712, cysteine 718-cysteine 730, cysteine 725-cysteine 739, cysteine 741-cysteine 750, cysteine 757-cysteine 769, cysteine 764-cysteine 778, cysteine 780-cysteine 793, cysteine 799-cysteine 811, cysteine 806-cysteine 820, cysteine 822-cysteine 835, cysteine 881-cysteine 893, cysteine 887-cysteine 902, cysteine 904-cysteine 918, cysteine 924-cysteine 936, cysteine 930-cysteine 945, cysteine 947-cysteine 960, cysteine 966-cysteine 977, cysteine 972-cysteine 986, cysteine 988-cysteine 1001, cysteine 1095-cysteine 1107, cysteine 1101-cysteine 1116, and cysteine 1118-cysteine 1131. One can recognise an EGF-like 4; calcium-binding domain in the interval 630-671 (DIDECRRVPTPCAPGRCENTPGSFRCVCGTGFQAGPRATECL). Residues 672-713 (DVDECRRVPPPCDRGRCENTPGSFLCVCPAGYQAAPHGASCQ) enclose the EGF-like 5; calcium-binding domain. Positions 714–751 (DVDECTQSPGLCGRGVCENLPGSFRCVCPAGFRGSACE) constitute an EGF-like 6; calcium-binding domain. In terms of domain architecture, EGF-like 7; calcium-binding spans 753–794 (DVDECAQQPPPCGPGRCDNTAGSFHCACPAGFRSRGPGAPCQ). In terms of domain architecture, EGF-like 8; calcium-binding spans 795 to 836 (DVDECSRSPSPCAYGRCENTEGSFKCVCPTGFQPNAAGSECE). Residues 877–919 (DVDECSSGTPCGLHGQCTNTKGSFHCSCSTGYRAPSGQPGPCA) form the EGF-like 9; calcium-binding domain. In terms of domain architecture, EGF-like 10; calcium-binding spans 920-961 (DINECLEGDFCFPHGECLNTDGSFTCTCAPGYRPGPRGASCL). The EGF-like 11; calcium-binding domain occupies 962–1002 (DVDECSEEDLCQSGICTNTDGSFECICPPGHRAGPDLASCL). The EGF-like 12; calcium-binding domain maps to 1091–1132 (DVDECRNRSFCGAHAMCQNLPGSFQCVCDQGYEGARDGRHCV). The N-linked (GlcNAc...) asparagine glycan is linked to asparagine 1097. Positions 1171 to 1221 (TGRCVPPRAPAGTFPGSQPQAPASPSLPARPPAPPPPRRPSPPRQGPVSSG) are disordered. Positions 1185 to 1197 (PGSQPQAPASPSL) are enriched in low complexity. The span at 1198-1215 (PARPPAPPPPRRPSPPRQ) shows a compositional bias: pro residues. Residues 1223-1277 (RECYFDTAAPDACDNILARNVTWQECCCTVGEGWGSGCRIQQCPGTETAEYQSLC) form the TB 3 domain. Intrachain disulfides connect cysteine 1225–cysteine 1248, cysteine 1235–cysteine 1260, cysteine 1249–cysteine 1265, cysteine 1250–cysteine 1277, cysteine 1299–cysteine 1312, cysteine 1307–cysteine 1321, cysteine 1323–cysteine 1336, cysteine 1342–cysteine 1354, cysteine 1349–cysteine 1363, and cysteine 1365–cysteine 1378. N-linked (GlcNAc...) asparagine glycosylation occurs at asparagine 1242. Positions 1295–1337 (DVDECQLFQDQVCKSGVCVNTAPGYSCYCSNGFYYHAHRLECV) constitute an EGF-like 13; calcium-binding domain. The EGF-like 14; calcium-binding domain maps to 1338 to 1379 (DNDECADEEPACEGGRCVNTVGSYHCTCEPPLVLDGSRRRCV). Asparagine 1381 is a glycosylation site (N-linked (GlcNAc...) asparagine). Residues 1391–1444 (GVCWQEVGPDLVCSRPRLDRQATYTECCCLYGEAWGMDCALCPAQDSDDFEALC) form the TB 4 domain. Cystine bridges form between cysteine 1393–cysteine 1417, cysteine 1403–cysteine 1429, cysteine 1418–cysteine 1432, and cysteine 1419–cysteine 1444. Pro residues predominate over residues 1488 to 1500 (VLPYDPYPPPPGP). Residues 1488–1566 (VLPYDPYPPP…SSERGSYTGA (79 aa)) form a disordered region. Threonine 1564 is modified (phosphothreonine). 2 consecutive EGF-like domains span residues 1575-1615 (EAEE…MSCV) and 1616-1660 (DVNE…HHCA). Intrachain disulfides connect cysteine 1579/cysteine 1590, cysteine 1585/cysteine 1599, cysteine 1601/cysteine 1614, cysteine 1620/cysteine 1635, cysteine 1630/cysteine 1644, and cysteine 1646/cysteine 1659.

This sequence belongs to the LTBP family. In terms of assembly, forms part of the large latent transforming growth factor beta precursor complex; removal is essential for activation of complex. Interacts with LTBP1 and TGFB1. Interacts with EFEMP2; this interaction promotes fibrillar deposition of EFEMP2. Post-translationally, contains hydroxylated asparagine residues.

Its subcellular location is the secreted. The protein localises to the extracellular space. It localises to the extracellular matrix. Key regulator of transforming growth factor beta (TGFB1, TGFB2 and TGFB3) that controls TGF-beta activation by maintaining it in a latent state during storage in extracellular space. Associates specifically via disulfide bonds with the Latency-associated peptide (LAP), which is the regulatory chain of TGF-beta, and regulates integrin-dependent activation of TGF-beta. The sequence is that of Latent-transforming growth factor beta-binding protein 4 (Ltbp4) from Mus musculus (Mouse).